Here is a 199-residue protein sequence, read N- to C-terminus: Nucleoid occlusion factor SlmA (199 aa).

Residues 11-71 form the HTH tetR-type domain; sequence ERRQQVLTVL…ALIDNLEAHL (61 aa). Positions 34-53 form a DNA-binding region, H-T-H motif; the sequence is TTARIAAEVGVSEAALYRYY.

Belongs to the nucleoid occlusion factor SlmA family. Homodimer. Interacts with FtsZ.

The protein resides in the cytoplasm. The protein localises to the nucleoid. Required for nucleoid occlusion (NO) phenomenon, which prevents Z-ring formation and cell division over the nucleoid. Acts as a DNA-associated cell division inhibitor that binds simultaneously chromosomal DNA and FtsZ, and disrupts the assembly of FtsZ polymers. SlmA-DNA-binding sequences (SBS) are dispersed on non-Ter regions of the chromosome, preventing FtsZ polymerization at these regions. The polypeptide is Nucleoid occlusion factor SlmA (Pasteurella multocida (strain Pm70)).